We begin with the raw amino-acid sequence, 642 residues long: MAPKPPPGTSARAWDGVTPALSEWVLDAVASMGFTRMTPVQASAIPLFMAHKDVVVEAVTGSGKTLSFLIPVVEKLLRLEEPLKKHHVGAIIISPTRELASQIYNVLTSLLAFHPPSASTLKPSDDDDDAPRQKFPSSTLKVVPQLLLGGSTTPAEDLSTFLKRSPNLLVSTPGRLLELLSSPHVHCPQSSFEMLVMDEADRLLDLGFKDTLQNILRRLPKQRRTGLFSASVSEAVDQIVRVGLRNPVKVMVKVKGTSGVQDKRTPASLQMTYLTAPPTHKFPAIKHILYSLEPAPQKTIMFVSTCSGVDYLSAILPSIIGDDFQLIPLHGKHQANVREKNFNRFVNSHTPAILLTTDVASRGLDIPSVDVVIQIDPPSDPKTFIHRCGRAGRAGRKGLSVVLLHPGREEDYVSFLEVRKTPVAPYPHTLTITDADAAAATETARKAVLADRALHDRGQKAFVSWFRSYSKHQASSIFRVADLDWEGLGNAWGLLKLPKMPELRNFQGDRTLGVNLDWENYAYKDKQREKRRKEQVQENAENGVADDQAAGKKRSSESVAWSRNLDNRNKKLKRREAKQARQQKDKWEKMTEEERQKVLETEKMLEQIRVKNEEERLLRRAAKDKESKAAGGDDDDEFKGFD.

The Q motif motif lies at 14–42 (WDGVTPALSEWVLDAVASMGFTRMTPVQA). Residues 45–250 (IPLFMAHKDV…RVGLRNPVKV (206 aa)) enclose the Helicase ATP-binding domain. 58–65 (AVTGSGKT) is an ATP binding site. Positions 198 to 201 (DEAD) match the DEAD box motif. In terms of domain architecture, Helicase C-terminal spans 284 to 438 (AIKHILYSLE…TLTITDADAA (155 aa)). A coiled-coil region spans residues 522 to 625 (AYKDKQREKR…RLLRRAAKDK (104 aa)). Basic and acidic residues-rich tracts occupy residues 527-536 (QREKRRKEQV) and 577-628 (AKQA…KESK). The tract at residues 527-642 (QREKRRKEQV…DDDDEFKGFD (116 aa)) is disordered. Positions 632 to 642 (GDDDDEFKGFD) are enriched in acidic residues.

This sequence belongs to the DEAD box helicase family. DDX55/SPB4 subfamily. Component of pre-60S ribosomal complexes.

The protein resides in the nucleus. Its subcellular location is the nucleolus. It catalyses the reaction ATP + H2O = ADP + phosphate + H(+). Its function is as follows. ATP-binding RNA helicase involved in the biogenesis of 60S ribosomal subunits. Binds 90S pre-ribosomal particles and dissociates from pre-60S ribosomal particles after processing of 27SB pre-rRNA. Required for the normal formation of 18S rRNA through the processing of pre-rRNAs at sites A0, A1 and A2, and the normal formation of 25S and 5.8S rRNAs through the processing of pre-rRNAs at sites C1 and C2. This chain is ATP-dependent rRNA helicase spb4, found in Aspergillus niger (strain ATCC MYA-4892 / CBS 513.88 / FGSC A1513).